Consider the following 146-residue polypeptide: Protein US8.5 (146 aa).

The interval 63 to 93 (LIAIADARGDPPETLPPGAGGAAPACRRPPR) is disordered. The span at 84 to 93 (AAPACRRPPR) shows a compositional bias: low complexity.

This sequence belongs to the HHV-1 US8.5 protein family. In terms of processing, phosphorylated.

It is found in the host nucleus. Its subcellular location is the host nucleolus. This Human herpesvirus 2 (strain HG52) (HHV-2) protein is Protein US8.5.